A 37-amino-acid polypeptide reads, in one-letter code: Cytochrome b6-f complex subunit 5 (37 aa).

A helical transmembrane segment spans residues 5-25 (LPSGIVLGLIPITLAGLFVTA).

This sequence belongs to the PetG family. The 4 large subunits of the cytochrome b6-f complex are cytochrome b6, subunit IV (17 kDa polypeptide, PetD), cytochrome f and the Rieske protein, while the 4 small subunits are PetG, PetL, PetM and PetN. The complex functions as a dimer.

It localises to the plastid. Its subcellular location is the chloroplast thylakoid membrane. Its function is as follows. Component of the cytochrome b6-f complex, which mediates electron transfer between photosystem II (PSII) and photosystem I (PSI), cyclic electron flow around PSI, and state transitions. PetG is required for either the stability or assembly of the cytochrome b6-f complex. The protein is Cytochrome b6-f complex subunit 5 of Pinus thunbergii (Japanese black pine).